The primary structure comprises 230 residues: Ribonuclease 3 (230 aa).

The RNase III domain occupies 1–134; it reads MKQLEELLST…FLGALLLDKG (134 aa). A Mg(2+)-binding site is contributed by glutamate 47. Aspartate 51 is a catalytic residue. Positions 120 and 123 each coordinate Mg(2+). Glutamate 123 is a catalytic residue. Residues 160-229 form the DRBM domain; that stretch reads DYKTCLQEFL…AKNALAQLSE (70 aa).

The protein belongs to the ribonuclease III family. In terms of assembly, homodimer. Mg(2+) serves as cofactor.

The protein localises to the cytoplasm. The catalysed reaction is Endonucleolytic cleavage to 5'-phosphomonoester.. Functionally, digests double-stranded RNA. Involved in the processing of primary rRNA transcript to yield the immediate precursors to the large and small rRNAs (23S and 16S). Processes some mRNAs, and tRNAs when they are encoded in the rRNA operon. Processes pre-crRNA and tracrRNA of type II CRISPR loci if present in the organism. The polypeptide is Ribonuclease 3 (Streptococcus pyogenes serotype M49 (strain NZ131)).